We begin with the raw amino-acid sequence, 340 residues long: Anthranilate phosphoribosyltransferase (340 aa).

5-phospho-alpha-D-ribose 1-diphosphate is bound by residues glycine 84, 87 to 88 (GD), threonine 92, 94 to 97 (NIST), 112 to 120 (KHGSRSVSS), and serine 124. Glycine 84 is an anthranilate binding site. Serine 96 serves as a coordination point for Mg(2+). Arginine 170 is an anthranilate binding site. Residues aspartate 228 and glutamate 229 each contribute to the Mg(2+) site.

This sequence belongs to the anthranilate phosphoribosyltransferase family. In terms of assembly, homodimer. Mg(2+) serves as cofactor.

The enzyme catalyses N-(5-phospho-beta-D-ribosyl)anthranilate + diphosphate = 5-phospho-alpha-D-ribose 1-diphosphate + anthranilate. The protein operates within amino-acid biosynthesis; L-tryptophan biosynthesis; L-tryptophan from chorismate: step 2/5. In terms of biological role, catalyzes the transfer of the phosphoribosyl group of 5-phosphorylribose-1-pyrophosphate (PRPP) to anthranilate to yield N-(5'-phosphoribosyl)-anthranilate (PRA). This Psychromonas ingrahamii (strain DSM 17664 / CCUG 51855 / 37) protein is Anthranilate phosphoribosyltransferase.